A 357-amino-acid polypeptide reads, in one-letter code: tRNA pseudouridine synthase D (357 aa).

Aspartate 76 serves as the catalytic Nucleophile. The TRUD domain occupies 151-331 (GMPNYFGYQR…DGRYKDEEAQ (181 aa)).

Belongs to the pseudouridine synthase TruD family.

The enzyme catalyses uridine(13) in tRNA = pseudouridine(13) in tRNA. Functionally, responsible for synthesis of pseudouridine from uracil-13 in transfer RNAs. The protein is tRNA pseudouridine synthase D of Sulfurimonas denitrificans (strain ATCC 33889 / DSM 1251) (Thiomicrospira denitrificans (strain ATCC 33889 / DSM 1251)).